A 263-amino-acid chain; its full sequence is Imidazole glycerol phosphate synthase subunit HisF (263 aa).

Residues Asp-22 and Asp-141 contribute to the active site.

The protein belongs to the HisA/HisF family. As to quaternary structure, heterodimer of HisH and HisF.

It localises to the cytoplasm. The catalysed reaction is 5-[(5-phospho-1-deoxy-D-ribulos-1-ylimino)methylamino]-1-(5-phospho-beta-D-ribosyl)imidazole-4-carboxamide + L-glutamine = D-erythro-1-(imidazol-4-yl)glycerol 3-phosphate + 5-amino-1-(5-phospho-beta-D-ribosyl)imidazole-4-carboxamide + L-glutamate + H(+). The protein operates within amino-acid biosynthesis; L-histidine biosynthesis; L-histidine from 5-phospho-alpha-D-ribose 1-diphosphate: step 5/9. In terms of biological role, IGPS catalyzes the conversion of PRFAR and glutamine to IGP, AICAR and glutamate. The HisF subunit catalyzes the cyclization activity that produces IGP and AICAR from PRFAR using the ammonia provided by the HisH subunit. In Clavibacter michiganensis subsp. michiganensis (strain NCPPB 382), this protein is Imidazole glycerol phosphate synthase subunit HisF.